The sequence spans 258 residues: Regulatory protein RecX (258 aa).

The protein belongs to the RecX family.

It is found in the cytoplasm. Functionally, modulates RecA activity. This Streptococcus thermophilus (strain ATCC BAA-491 / LMD-9) protein is Regulatory protein RecX.